The primary structure comprises 497 residues: Signal recognition particle subunit SRP54 1 (497 aa).

A G-domain region spans residues 1-295 (MVLAQLGGSI…DVKPFVSRLL (295 aa)). GTP is bound by residues 108-115 (GLQGSGKT), 190-194 (DTSGR), and 248-251 (TKLD). Positions 296-497 (GMGDLSGLMD…MLGGMGLGGD (202 aa)) are M-domain.

Belongs to the GTP-binding SRP family. SRP54 subfamily. As to quaternary structure, component of a signal recognition particle (SRP) complex that consists of a 7SL RNA molecule of 300 nucleotides and six protein subunits: SRP72, SRP68, SRP54, SRP19, SRP14 and SRP9.

It localises to the cytoplasm. The protein localises to the endoplasmic reticulum. It catalyses the reaction GTP + H2O = GDP + phosphate + H(+). Functionally, component of the signal recognition particle (SRP) complex, a ribonucleoprotein complex that mediates the cotranslational targeting of secretory and membrane proteins to the endoplasmic reticulum (ER). As part of the SRP complex, associates with the SRP receptor (SR) component SRPRA to target secretory proteins to the endoplasmic reticulum membrane. Binds to the signal sequence of presecretory proteins when they emerge from the ribosomes. Displays basal GTPase activity, and stimulates reciprocal GTPase activation of the SR subunit SRPRA. Forms a guanosine 5'-triphosphate (GTP)-dependent complex with the SR subunit SRPRA. SR compaction and GTPase mediated rearrangement of SR drive SRP-mediated cotranslational protein translocation into the ER. Requires the presence of SRP9/SRP14 and/or SRP19 to stably interact with RNA. This Hordeum vulgare (Barley) protein is Signal recognition particle subunit SRP54 1 (SRP54-1).